A 360-amino-acid chain; its full sequence is Phospho-N-acetylmuramoyl-pentapeptide-transferase (360 aa).

10 helical membrane passes run 25-45 (RGIL…PWMI), 73-93 (TMGG…WADL), 97-117 (YVWV…VDDY), 134-154 (YFWQ…TAPT), 168-188 (VTIP…VGSS), 199-219 (GLAI…CYLS), 236-256 (SGEL…FLWF), 263-283 (VFMG…IAVI), 288-308 (IVLF…VIQV), and 338-358 (VIVR…ATLK).

Belongs to the glycosyltransferase 4 family. MraY subfamily. Requires Mg(2+) as cofactor.

It is found in the cell inner membrane. It carries out the reaction UDP-N-acetyl-alpha-D-muramoyl-L-alanyl-gamma-D-glutamyl-meso-2,6-diaminopimeloyl-D-alanyl-D-alanine + di-trans,octa-cis-undecaprenyl phosphate = di-trans,octa-cis-undecaprenyl diphospho-N-acetyl-alpha-D-muramoyl-L-alanyl-D-glutamyl-meso-2,6-diaminopimeloyl-D-alanyl-D-alanine + UMP. Its pathway is cell wall biogenesis; peptidoglycan biosynthesis. In terms of biological role, catalyzes the initial step of the lipid cycle reactions in the biosynthesis of the cell wall peptidoglycan: transfers peptidoglycan precursor phospho-MurNAc-pentapeptide from UDP-MurNAc-pentapeptide onto the lipid carrier undecaprenyl phosphate, yielding undecaprenyl-pyrophosphoryl-MurNAc-pentapeptide, known as lipid I. The sequence is that of Phospho-N-acetylmuramoyl-pentapeptide-transferase from Pseudomonas putida (strain ATCC 700007 / DSM 6899 / JCM 31910 / BCRC 17059 / LMG 24140 / F1).